The following is a 209-amino-acid chain: Ribosomal RNA large subunit methyltransferase E (209 aa).

Positions 63, 65, 83, 99, and 124 each coordinate S-adenosyl-L-methionine. K164 serves as the catalytic Proton acceptor.

It belongs to the class I-like SAM-binding methyltransferase superfamily. RNA methyltransferase RlmE family.

It is found in the cytoplasm. The enzyme catalyses uridine(2552) in 23S rRNA + S-adenosyl-L-methionine = 2'-O-methyluridine(2552) in 23S rRNA + S-adenosyl-L-homocysteine + H(+). Functionally, specifically methylates the uridine in position 2552 of 23S rRNA at the 2'-O position of the ribose in the fully assembled 50S ribosomal subunit. The protein is Ribosomal RNA large subunit methyltransferase E of Vibrio campbellii (strain ATCC BAA-1116).